The following is a 205-amino-acid chain: Holliday junction branch migration complex subunit RuvA (205 aa).

The domain I stretch occupies residues 1–62; it reads MFEYVTGYVE…EDIMALYGFK (62 aa). The interval 63–141 is domain II; sequence TREERLLFTK…DVVPDAFVDL (79 aa). The tract at residues 142–152 is flexible linker; that stretch reads FSDTERFDEKK. The interval 153 to 205 is domain III; it reads GTSAELDEALEALRALGYAEREVSRVVPELLKESLTTDQYIKKALSLLLNGKR.

Belongs to the RuvA family. Homotetramer. Forms an RuvA(8)-RuvB(12)-Holliday junction (HJ) complex. HJ DNA is sandwiched between 2 RuvA tetramers; dsDNA enters through RuvA and exits via RuvB. An RuvB hexamer assembles on each DNA strand where it exits the tetramer. Each RuvB hexamer is contacted by two RuvA subunits (via domain III) on 2 adjacent RuvB subunits; this complex drives branch migration. In the full resolvosome a probable DNA-RuvA(4)-RuvB(12)-RuvC(2) complex forms which resolves the HJ.

The protein resides in the cytoplasm. In terms of biological role, the RuvA-RuvB-RuvC complex processes Holliday junction (HJ) DNA during genetic recombination and DNA repair, while the RuvA-RuvB complex plays an important role in the rescue of blocked DNA replication forks via replication fork reversal (RFR). RuvA specifically binds to HJ cruciform DNA, conferring on it an open structure. The RuvB hexamer acts as an ATP-dependent pump, pulling dsDNA into and through the RuvAB complex. HJ branch migration allows RuvC to scan DNA until it finds its consensus sequence, where it cleaves and resolves the cruciform DNA. The polypeptide is Holliday junction branch migration complex subunit RuvA (Bacillus cereus (strain G9842)).